The sequence spans 235 residues: Phosphoribosylaminoimidazole-succinocarboxamide synthase (235 aa).

The protein belongs to the SAICAR synthetase family.

The enzyme catalyses 5-amino-1-(5-phospho-D-ribosyl)imidazole-4-carboxylate + L-aspartate + ATP = (2S)-2-[5-amino-1-(5-phospho-beta-D-ribosyl)imidazole-4-carboxamido]succinate + ADP + phosphate + 2 H(+). The protein operates within purine metabolism; IMP biosynthesis via de novo pathway; 5-amino-1-(5-phospho-D-ribosyl)imidazole-4-carboxamide from 5-amino-1-(5-phospho-D-ribosyl)imidazole-4-carboxylate: step 1/2. This is Phosphoribosylaminoimidazole-succinocarboxamide synthase from Chlorobium chlorochromatii (strain CaD3).